We begin with the raw amino-acid sequence, 469 residues long: 1-aminocyclopropane-1-carboxylate synthase 8 (469 aa).

Residues Glu47 and Tyr85 each coordinate substrate. Lys272 is modified (N6-(pyridoxal phosphate)lysine).

The protein belongs to the class-I pyridoxal-phosphate-dependent aminotransferase family. In terms of assembly, homodimer and heterodimer. In vivo, the relevance of heterodimerization with other ACS enzymes is however unsure. Interacts with GRF3. Requires pyridoxal 5'-phosphate as cofactor. May be processed at its C-terminus. As to expression, expressed in roots. Expressed at low level in flowers and siliques.

The catalysed reaction is S-adenosyl-L-methionine = 1-aminocyclopropane-1-carboxylate + S-methyl-5'-thioadenosine + H(+). It participates in alkene biosynthesis; ethylene biosynthesis via S-adenosyl-L-methionine; ethylene from S-adenosyl-L-methionine: step 1/2. Its function is as follows. 1-aminocyclopropane-1-carboxylate synthase (ACS) enzymes catalyze the conversion of S-adenosyl-L-methionine (SAM) into 1-aminocyclopropane-1-carboxylate (ACC), a direct precursor of ethylene. The sequence is that of 1-aminocyclopropane-1-carboxylate synthase 8 (ACS8) from Arabidopsis thaliana (Mouse-ear cress).